A 95-amino-acid polypeptide reads, in one-letter code: Small ribosomal subunit protein uS17 (95 aa).

The protein belongs to the universal ribosomal protein uS17 family. As to quaternary structure, part of the 30S ribosomal subunit.

Functionally, one of the primary rRNA binding proteins, it binds specifically to the 5'-end of 16S ribosomal RNA. The sequence is that of Small ribosomal subunit protein uS17 from Mesomycoplasma hyopneumoniae (strain 7448) (Mycoplasma hyopneumoniae).